The primary structure comprises 427 residues: Adenylosuccinate synthetase (427 aa).

GTP-binding positions include 12-18 (GDEGKGK) and 40-42 (GHT). Asp13 functions as the Proton acceptor in the catalytic mechanism. Asp13 and Gly40 together coordinate Mg(2+). IMP is bound by residues 13 to 16 (DEGK), 38 to 41 (NAGH), Thr128, Arg142, Gln223, Thr238, and Arg302. The Proton donor role is filled by His41. Position 298-304 (298-304 (TTTGRPR)) interacts with substrate. GTP-binding positions include Arg304, 330–332 (SID), and 412–414 (SVG).

The protein belongs to the adenylosuccinate synthetase family. Homodimer. The cofactor is Mg(2+).

It is found in the cytoplasm. It carries out the reaction IMP + L-aspartate + GTP = N(6)-(1,2-dicarboxyethyl)-AMP + GDP + phosphate + 2 H(+). It participates in purine metabolism; AMP biosynthesis via de novo pathway; AMP from IMP: step 1/2. In terms of biological role, plays an important role in the de novo pathway of purine nucleotide biosynthesis. Catalyzes the first committed step in the biosynthesis of AMP from IMP. This is Adenylosuccinate synthetase from Staphylococcus aureus (strain N315).